A 179-amino-acid chain; its full sequence is MNRLKEKYNKEITPALMKKFEYKSVMQVPKIEKIVINMGVGDAVQNAKAIDSAVEELTFIAGQKPVVTRAKKSIAGFRLREGMPIGAKVTLRGERMYDFLDKLISVSLPRVRDFRGISKKSFDGRGNYTLGIKEQLIFPEIDYDKVTKVRGMDIVIVTTANTDEEARELLTQLGMPFQK.

It belongs to the universal ribosomal protein uL5 family. Part of the 50S ribosomal subunit; part of the 5S rRNA/L5/L18/L25 subcomplex. Contacts the 5S rRNA and the P site tRNA. Forms a bridge to the 30S subunit in the 70S ribosome.

Functionally, this is one of the proteins that bind and probably mediate the attachment of the 5S RNA into the large ribosomal subunit, where it forms part of the central protuberance. In the 70S ribosome it contacts protein S13 of the 30S subunit (bridge B1b), connecting the 2 subunits; this bridge is implicated in subunit movement. Contacts the P site tRNA; the 5S rRNA and some of its associated proteins might help stabilize positioning of ribosome-bound tRNAs. The polypeptide is Large ribosomal subunit protein uL5 (Bacillus licheniformis (strain ATCC 14580 / DSM 13 / JCM 2505 / CCUG 7422 / NBRC 12200 / NCIMB 9375 / NCTC 10341 / NRRL NRS-1264 / Gibson 46)).